Here is a 77-residue protein sequence, read N- to C-terminus: Acyl carrier protein (77 aa).

Residues 2 to 77 (SDVAKRVKEI…DAIDYITEHT (76 aa)) enclose the Carrier domain. Ser-37 carries the O-(pantetheine 4'-phosphoryl)serine modification.

It belongs to the acyl carrier protein (ACP) family. Post-translationally, 4'-phosphopantetheine is transferred from CoA to a specific serine of apo-ACP by AcpS. This modification is essential for activity because fatty acids are bound in thioester linkage to the sulfhydryl of the prosthetic group.

Its subcellular location is the cytoplasm. It functions in the pathway lipid metabolism; fatty acid biosynthesis. Functionally, carrier of the growing fatty acid chain in fatty acid biosynthesis. The sequence is that of Acyl carrier protein from Trichlorobacter lovleyi (strain ATCC BAA-1151 / DSM 17278 / SZ) (Geobacter lovleyi).